The sequence spans 512 residues: ATP synthase subunit alpha (512 aa).

Gly-169–Thr-176 contacts ATP.

It belongs to the ATPase alpha/beta chains family. As to quaternary structure, F-type ATPases have 2 components, CF(1) - the catalytic core - and CF(0) - the membrane proton channel. CF(1) has five subunits: alpha(3), beta(3), gamma(1), delta(1), epsilon(1). CF(0) has four main subunits: a(1), b(1), b'(1) and c(9-12).

It localises to the cell inner membrane. The catalysed reaction is ATP + H2O + 4 H(+)(in) = ADP + phosphate + 5 H(+)(out). Its function is as follows. Produces ATP from ADP in the presence of a proton gradient across the membrane. The alpha chain is a regulatory subunit. In Jannaschia sp. (strain CCS1), this protein is ATP synthase subunit alpha.